A 650-amino-acid polypeptide reads, in one-letter code: Acetoacetyl-coenzyme A synthetase (650 aa).

199-202 contacts CoA; that stretch reads YNGK. ATP-binding positions include 392–394, Asp-504, Arg-519, and Arg-530; that span reads GSP. Val-546 contacts Mg(2+). A CoA-binding site is contributed by Arg-587. Lys-612 carries the N6-acetyllysine modification.

The protein belongs to the ATP-dependent AMP-binding enzyme family. The cofactor is Mg(2+). Acetylated. Deacetylation by the SIR2-homolog deacetylase activates the enzyme.

It carries out the reaction acetoacetate + ATP + CoA = acetoacetyl-CoA + AMP + diphosphate. Its pathway is biopolymer metabolism; poly-(R)-3-hydroxybutanoate degradation. Its function is as follows. Catalyzes the conversion of acetoacetate into acetoacetyl-CoA. Is involved in poly-3-hydroxybutyrate (PHB) degradation, which allows growth of R.meliloti on PHB cycle intermediates. This is Acetoacetyl-coenzyme A synthetase from Rhizobium meliloti (strain 1021) (Ensifer meliloti).